A 935-amino-acid polypeptide reads, in one-letter code: Clumping factor A (935 aa).

Positions 1 to 39 are cleaved as a signal peptide; the sequence is MNMKKKEKHAIRKKSIGVASVLVGTLIGFGLLSSKEADA. Positions 9–20 match the YSIRK-G/S signaling motif motif; the sequence is HAIRKKSIGVAS. Disordered regions lie at residues 34–205 and 529–906; these read SKEA…VSQA and FNNG…SEDE. The interval 40 to 542 is ligand binding A region; that stretch reads SENSVTQSDS…SGSGDGIDKP (503 aa). Residues 47–65 are compositionally biased toward low complexity; it reads SDSASNESKSNDSSSVSAA. Positions 71 to 105 are enriched in polar residues; the sequence is TNVSDTKTSSNTNNGETSVAQNPAQQETTQSSSTN. 2 stretches are compositionally biased toward low complexity: residues 106-132 and 143-162; these read ATTE…ATTQ and NQTS…SVNS. Residues 163-205 show a composition bias toward polar residues; it reads PQNSTNAENVSTTQDTSTEATPSNNESAPQNTDASNKDVVSQA. Positions 547–565 are enriched in acidic residues; the sequence is QPDEPGEIEPIPEDSDSDP. Residues 566–598 are compositionally biased toward low complexity; the sequence is GSDSGSDSNSDSGSDSGSDSTSDSGSDSASDSD. Over residues 599 to 863 the composition is skewed to acidic residues; that stretch reads SASDSDSASD…DNDSDSDSNS (265 aa). Residues 864-882 show a composition bias toward low complexity; it reads DSESGSNNNVVPPNSPKNG. The segment covering 889 to 898 has biased composition (basic and acidic residues); that stretch reads NEAKDSKEPL. The LPXTG sorting signal motif lies at 898 to 902; it reads LPDTG. Position 901 is a pentaglycyl murein peptidoglycan amidated threonine (T901). Positions 902–935 are cleaved as a propeptide — removed by sortase; that stretch reads GSEDEANTSLIWGLLASLGSLLLFRRKKENKDKK.

The protein belongs to the serine-aspartate repeat-containing protein (SDr) family.

The protein localises to the secreted. Its subcellular location is the cell wall. Cell surface-associated protein implicated in virulence. Promotes bacterial attachment exclusively to the gamma-chain of human fibrinogen. Induces formation of bacterial clumps. The sequence is that of Clumping factor A (clfA) from Staphylococcus aureus (strain Mu50 / ATCC 700699).